Consider the following 137-residue polypeptide: Small ribosomal subunit protein uS12 (137 aa).

Residues 1-24 are disordered; sequence MPTINQLVRKGRRSQSSKSKAPAL. A 3-methylthioaspartic acid modification is found at aspartate 102.

This sequence belongs to the universal ribosomal protein uS12 family. Part of the 30S ribosomal subunit. Contacts proteins S8 and S17. May interact with IF1 in the 30S initiation complex.

In terms of biological role, with S4 and S5 plays an important role in translational accuracy. Interacts with and stabilizes bases of the 16S rRNA that are involved in tRNA selection in the A site and with the mRNA backbone. Located at the interface of the 30S and 50S subunits, it traverses the body of the 30S subunit contacting proteins on the other side and probably holding the rRNA structure together. The combined cluster of proteins S8, S12 and S17 appears to hold together the shoulder and platform of the 30S subunit. The sequence is that of Small ribosomal subunit protein uS12 from Pediococcus pentosaceus (strain ATCC 25745 / CCUG 21536 / LMG 10740 / 183-1w).